We begin with the raw amino-acid sequence, 431 residues long: tRNA (adenine(37)-N6)-methyltransferase (431 aa).

The TsaA-like domain maps to 30–168 (TEPIGYLESC…YIADYDSPQN (139 aa)). Residues 47 to 49 (PRQ), 90 to 91 (HK), Arg-117, Leu-127, and 148 to 151 (IDGT) contribute to the S-adenosyl-L-methionine site. A disordered region spans residues 196–242 (LSGRGKVQPRQSTKERPKCLEDRTSGENSQKSRDMSEIQHTLPEDRE). The span at 207 to 242 (STKERPKCLEDRTSGENSQKSRDMSEIQHTLPEDRE) shows a compositional bias: basic and acidic residues.

The protein belongs to the tRNA methyltransferase O family.

It carries out the reaction N(6)-L-threonylcarbamoyladenosine(37) in tRNA + S-adenosyl-L-methionine = N(6)-methyl,N(6)-L-threonylcarbamoyladenosine(37) in tRNA + S-adenosyl-L-homocysteine + H(+). Functionally, S-adenosyl-L-methionine-dependent methyltransferase responsible for the addition of the methyl group in the formation of N6-methyl-N6-threonylcarbamoyladenosine at position 37 (m(6)t(6)A37) of the tRNA anticodon loop of tRNA(Ser)(GCU). The methyl group of m(6)t(6)A37 may improve the efficiency of the tRNA decoding ability. May bind to tRNA. The sequence is that of tRNA (adenine(37)-N6)-methyltransferase from Mus musculus (Mouse).